Consider the following 93-residue polypeptide: Large ribosomal subunit protein uL23cz/uL23cy (93 aa).

It belongs to the universal ribosomal protein uL23 family. As to quaternary structure, part of the 50S ribosomal subunit.

It localises to the plastid. The protein resides in the chloroplast. Binds to 23S rRNA. The sequence is that of Large ribosomal subunit protein uL23cz/uL23cy (rpl23-A) from Populus alba (White poplar).